We begin with the raw amino-acid sequence, 447 residues long: Signal recognition particle 54 kDa protein (447 aa).

GTP is bound by residues 103-110, 185-189, and 245-248; these read GVQGSGKT, DTAGR, and TKMD.

The protein belongs to the GTP-binding SRP family. SRP54 subfamily. As to quaternary structure, part of the signal recognition particle protein translocation system, which is composed of SRP and FtsY. Archaeal SRP consists of a 7S RNA molecule of 300 nucleotides and two protein subunits: SRP54 and SRP19.

The protein localises to the cytoplasm. It carries out the reaction GTP + H2O = GDP + phosphate + H(+). Its function is as follows. Involved in targeting and insertion of nascent membrane proteins into the cytoplasmic membrane. Binds to the hydrophobic signal sequence of the ribosome-nascent chain (RNC) as it emerges from the ribosomes. The SRP-RNC complex is then targeted to the cytoplasmic membrane where it interacts with the SRP receptor FtsY. This is Signal recognition particle 54 kDa protein from Saccharolobus islandicus (strain M.16.27) (Sulfolobus islandicus).